A 605-amino-acid polypeptide reads, in one-letter code: Protein kinase wis1 (605 aa).

Over residues 1 to 20 (MSSPNNQPLSCSLRQLSISP) the composition is skewed to polar residues. The segment at 1 to 141 (MSSPNNQPLS…TPPGPFPGGL (141 aa)) is disordered. Composition is skewed to low complexity over residues 31–73 (GSLL…SSPS) and 90–105 (RLGR…SLNL). A compositionally biased stretch (basic and acidic residues) spans 106 to 115 (DMKDPSEKPR). The residue at position 168 (Ser-168) is a Phosphoserine. The span at 188 to 200 (SQLAGRLSNSPVK) shows a compositional bias: polar residues. The segment at 188–263 (SQLAGRLSNS…PSSMASRRGL (76 aa)) is disordered. Over residues 244–256 (SNSNPTSPVSPSS) the composition is skewed to low complexity. Position 253 is a phosphoserine (Ser-253). In terms of domain architecture, Protein kinase spans 320-579 (IIKLEELGKG…YHELANHPWL (260 aa)). ATP contacts are provided by residues 326-334 (LGKGNYGVV) and Lys-349. Asp-441 serves as the catalytic Proton acceptor. At Ser-469 the chain carries Phosphoserine. The residue at position 473 (Thr-473) is a Phosphothreonine.

Belongs to the protein kinase superfamily. STE Ser/Thr protein kinase family. MAP kinase kinase subfamily. In terms of processing, dephosphorylated by pyp1 and pyp2.

It carries out the reaction L-seryl-[protein] + ATP = O-phospho-L-seryl-[protein] + ADP + H(+). It catalyses the reaction L-threonyl-[protein] + ATP = O-phospho-L-threonyl-[protein] + ADP + H(+). The catalysed reaction is L-tyrosyl-[protein] + ATP = O-phospho-L-tyrosyl-[protein] + ADP + H(+). Functionally, dosage-dependent regulator of mitosis with serine/ threonine protein kinase activity. May play a role in the integration of nutritional sensing with the control over entry into mitosis. It may interact with cdc25, wee1 and win1. May activate sty1. The chain is Protein kinase wis1 (wis1) from Schizosaccharomyces pombe (strain 972 / ATCC 24843) (Fission yeast).